An 86-amino-acid polypeptide reads, in one-letter code: Neurotoxin LmNaTx34.2 (86 aa).

Residues 1 to 18 form the signal peptide; it reads MKTLILVVIALMVIEVKS. In terms of domain architecture, LCN-type CS-alpha/beta spans 19-85; it reads DGYLMVRAGR…IWTYEKNTCS (67 aa). Intrachain disulfides connect Cys32/Cys84, Cys36/Cys57, Cys43/Cys64, and Cys47/Cys66.

Belongs to the long (4 C-C) scorpion toxin superfamily. Sodium channel inhibitor family. Beta subfamily. In terms of tissue distribution, expressed by the venom gland.

The protein localises to the secreted. Binds voltage-independently at site-4 of sodium channels (Nav) and shift the voltage of activation toward more negative potentials thereby affecting sodium channel activation and promoting spontaneous and repetitive firing. The protein is Neurotoxin LmNaTx34.2 of Lychas mucronatus (Chinese swimming scorpion).